The chain runs to 349 residues: Protein-glutamate methylesterase/protein-glutamine glutaminase 1 (349 aa).

In terms of domain architecture, Response regulatory spans 4-119 (RILVVDDSAV…KGFLEDSARR (116 aa)). Residue aspartate 53 is modified to 4-aspartylphosphate. In terms of domain architecture, CheB-type methylesterase spans 159-349 (PRAGRAELVV…VASAVLAWAR (191 aa)). Active-site residues include serine 172, histidine 198, and aspartate 293.

The protein belongs to the CheB family. In terms of processing, phosphorylated by CheA. Phosphorylation of the N-terminal regulatory domain activates the methylesterase activity.

It is found in the cytoplasm. It catalyses the reaction [protein]-L-glutamate 5-O-methyl ester + H2O = L-glutamyl-[protein] + methanol + H(+). It carries out the reaction L-glutaminyl-[protein] + H2O = L-glutamyl-[protein] + NH4(+). Functionally, involved in chemotaxis. Part of a chemotaxis signal transduction system that modulates chemotaxis in response to various stimuli. Catalyzes the demethylation of specific methylglutamate residues introduced into the chemoreceptors (methyl-accepting chemotaxis proteins or MCP) by CheR. Also mediates the irreversible deamidation of specific glutamine residues to glutamic acid. The chain is Protein-glutamate methylesterase/protein-glutamine glutaminase 1 from Anaeromyxobacter dehalogenans (strain 2CP-C).